Here is a 1482-residue protein sequence, read N- to C-terminus: Chromosome partition protein MukB (1482 aa).

34–41 (GGNGAGKS) contacts ATP. Coiled-coil stretches lie at residues 337 to 468 (LNLV…LSVA), 509 to 604 (QHLA…APIW), 780 to 805 (RAAR…ATLS), 835 to 1044 (EAEI…ELVD), 1070 to 1115 (TNRA…TAKA), and 1210 to 1265 (EAIE…LQAV). Residues 666–783 (PGGAEDQRLV…AVPLFGRAAR (118 aa)) are flexible hinge.

This sequence belongs to the SMC family. MukB subfamily. Homodimerization via its hinge domain. Binds to DNA via its C-terminal region. Interacts, and probably forms a ternary complex, with MukE and MukF via its C-terminal region. The complex formation is stimulated by calcium or magnesium. Interacts with tubulin-related protein FtsZ.

The protein localises to the cytoplasm. Its subcellular location is the nucleoid. Functionally, plays a central role in chromosome condensation, segregation and cell cycle progression. Functions as a homodimer, which is essential for chromosome partition. Involved in negative DNA supercoiling in vivo, and by this means organize and compact chromosomes. May achieve or facilitate chromosome segregation by condensation DNA from both sides of a centrally located replisome during cell division. In Serratia proteamaculans (strain 568), this protein is Chromosome partition protein MukB.